The primary structure comprises 102 residues: MSKQKIRIRLKAFDHTILDQSAEKIVETAKSTGAKVVGPVPLPTEKDVITILRAVHKYKDSREQFEVRTHKRLIDIVNPSPKTVDALMRLNLPAGVDIEIKL.

Belongs to the universal ribosomal protein uS10 family. As to quaternary structure, part of the 30S ribosomal subunit.

In terms of biological role, involved in the binding of tRNA to the ribosomes. This chain is Small ribosomal subunit protein uS10, found in Clostridium perfringens (strain ATCC 13124 / DSM 756 / JCM 1290 / NCIMB 6125 / NCTC 8237 / Type A).